A 238-amino-acid polypeptide reads, in one-letter code: Putative csd-like protein HI_1343 (238 aa).

The residue at position 146 (Lys-146) is an N6-(pyridoxal phosphate)lysine.

The protein belongs to the class-V pyridoxal-phosphate-dependent aminotransferase family. Csd subfamily.

This chain is Putative csd-like protein HI_1343, found in Haemophilus influenzae (strain ATCC 51907 / DSM 11121 / KW20 / Rd).